The sequence spans 129 residues: MARKQVSRKRRVKKNIENGVAHIRSTFNNTIVTITDEFGNALSWSSAGALGFKGSKKSTPFAAQMASETASKTAMEHGLKTVEVTVKGPGPGRESAIRALQSAGLEVTAIRDVTPVPHNGCRPPKRRRV.

Belongs to the universal ribosomal protein uS11 family. As to quaternary structure, part of the 30S ribosomal subunit. Interacts with proteins S7 and S18. Binds to IF-3.

In terms of biological role, located on the platform of the 30S subunit, it bridges several disparate RNA helices of the 16S rRNA. Forms part of the Shine-Dalgarno cleft in the 70S ribosome. In Staphylococcus epidermidis (strain ATCC 12228 / FDA PCI 1200), this protein is Small ribosomal subunit protein uS11.